The following is a 29-amino-acid chain: Alpha-amylase inhibitor 2 (29 aa).

It belongs to the protease inhibitor I6 (cereal trypsin/alpha-amylase inhibitor) family.

It is found in the secreted. Its function is as follows. Alpha-amylase inhibitor. The polypeptide is Alpha-amylase inhibitor 2 (Saussurea costus (Costus)).